The sequence spans 580 residues: Guanine nucleotide-binding protein alpha-4 subunit (580 aa).

Residues 1 to 10 (MSPSVSSPQL) are compositionally biased toward polar residues. The disordered stretch occupies residues 1-28 (MSPSVSSPQLRHTKSNRAISRIDRTDPL). Residues 93-579 (RVYKMVLLGQ…RENLKLTGLV (487 aa)) enclose the G-alpha domain. The segment at 96 to 109 (KMVLLGQAGAGKTT) is G1 motif. Position 101-108 (101-108 (GQAGAGKT)) interacts with GTP. 2 disordered regions span residues 160 to 196 (KSSE…PNDA) and 302 to 325 (GRAA…KDNS). Residues 167–183 (LESSTSASTSTSASASS) are compositionally biased toward low complexity. Residues 387–395 (DILHSRVRT) form a G2 motif region. Residues 389-395 (LHSRVRT), 415-419 (DVGGS), 484-487 (NKID), and A551 each bind GTP. T395 serves as a coordination point for Mg(2+). Residues 411-420 (YRIYDVGGSR) are G3 motif. The G4 motif stretch occupies residues 480-487 (ILFLNKID). Residues 549 to 554 (TVATST) are G5 motif.

This sequence belongs to the G-alpha family. G proteins are composed of 3 units; alpha, beta and gamma. The alpha chain contains the guanine nucleotide binding site.

Functionally, guanine nucleotide-binding proteins (G proteins) are involved as modulators or transducers in various transmembrane signaling systems. This is Guanine nucleotide-binding protein alpha-4 subunit (GPA4) from Mycosarcoma maydis (Corn smut fungus).